The primary structure comprises 126 residues: NADH-quinone oxidoreductase subunit A (126 aa).

3 consecutive transmembrane segments (helical) span residues 11 to 31, 64 to 84, and 98 to 118; these read IAIQ…SSWL, FLVA…YPWA, and EGFV…IYVI.

Belongs to the complex I subunit 3 family. In terms of assembly, NDH-1 is composed of 14 different subunits. Subunits NuoA, H, J, K, L, M, N constitute the membrane sector of the complex.

It is found in the cell inner membrane. It carries out the reaction a quinone + NADH + 5 H(+)(in) = a quinol + NAD(+) + 4 H(+)(out). In terms of biological role, NDH-1 shuttles electrons from NADH, via FMN and iron-sulfur (Fe-S) centers, to quinones in the respiratory chain. The immediate electron acceptor for the enzyme in this species is believed to be a menaquinone. Couples the redox reaction to proton translocation (for every two electrons transferred, four hydrogen ions are translocated across the cytoplasmic membrane), and thus conserves the redox energy in a proton gradient. The sequence is that of NADH-quinone oxidoreductase subunit A from Cytophaga hutchinsonii (strain ATCC 33406 / DSM 1761 / CIP 103989 / NBRC 15051 / NCIMB 9469 / D465).